Consider the following 415-residue polypeptide: Serine/threonine transporter SstT (415 aa).

The next 8 helical transmembrane spans lie at 15–35, 45–65, 85–105, 142–162, 193–213, 217–237, 301–321, and 331–351; these read GSLVKQILVGLIAGILLAWLA, LGTLFVGALKAVAPVLVWILV, ILYILGTFFAALVAVAGSFIF, ALLNGNYIGILAWAIGLGIAL, VGIFGLVSATIAETGFNALLG, LLVVLLSCMLVMALVVNPLIV, GAAVTIPVLTLAAVNTLGIPV, and VVSAICACGASGVAGGSLLLI.

This sequence belongs to the dicarboxylate/amino acid:cation symporter (DAACS) (TC 2.A.23) family.

The protein localises to the cell inner membrane. The catalysed reaction is L-serine(in) + Na(+)(in) = L-serine(out) + Na(+)(out). It catalyses the reaction L-threonine(in) + Na(+)(in) = L-threonine(out) + Na(+)(out). Its function is as follows. Involved in the import of serine and threonine into the cell, with the concomitant import of sodium (symport system). This chain is Serine/threonine transporter SstT, found in Photorhabdus laumondii subsp. laumondii (strain DSM 15139 / CIP 105565 / TT01) (Photorhabdus luminescens subsp. laumondii).